Consider the following 432-residue polypeptide: DNA damage-binding protein 2 (432 aa).

Positions 1–31 are disordered; that stretch reads MAPKKCPETQKSPDVAVLLRSKSRRGPQELE. Residues Lys-35 and Lys-77 each carry the N6-acetyllysine modification. Required for interaction with DDB1 regions lie at residues 68-79 and 87-98; these read SIVRDLYQHKLG and QQGLQKSFLHSL. WD repeat units follow at residues 116–151, 159–194, 203–238, 244–287, and 290–329; these read SLAWHPTHPSTLAVGSKGGDIMIWNFGIKDKPIFLK, ITGLKFNHLNTNQFFASSMEGTTRLQDFKGNILRVY, WFCSLDVSAKSRVVVTGDNMGHVILLSTDGKELWNL, KVAH…SLPH, and PVNAACFSPDGARLLTTDQNNEIRVYSASQWDSPLNLISH. Residues 256-274 carry the DWD box motif; sequence WLLATASIDQTVKIWDLRQ. A photolesion recognition region spans residues 334 to 336; that stretch reads FQH. WD repeat units lie at residues 343–386 and 396–420; these read TWHS…MCQL and SLNEFNPMGDTLASTMGYHILIWSQ.

Belongs to the WD repeat DDB2/WDR76 family. As to quaternary structure, component of the UV-DDB complex which includes DDB1 and DDB2. The UV-DDB complex interacts with monoubiquitinated histone H2A and binds to XPC via the DDB2 subunit. Component of the DCX (DDB1-CUL4-X-box) E3 ubiquitin-protein ligase complex DDB1-CUL4-ROC1 (also known as CUL4-DDB-ROC1 and CUL4-DDB-RBX1), which includes CUL4A or CUL4B, DDB1, DDB2 and RBX1. DDB2 may function as the substrate recognition module within this complex. The DDB1-CUL4-ROC1 complex may associate with the COP9 signalosome, and this inhibits the E3 ubiquitin-protein ligase activity of the complex. A large number of other DCX complexes may also exist in which an alternate substrate targeting subunit replaces DDB2. These targeting subunits are generally known as DCAF (DDB1- and CUL4-associated factor) or CDW (CUL4-DDB1-associated WD40-repeat) proteins. Post-translationally, phosphorylation by ABL1 negatively regulate UV-DDB activity. In terms of processing, ubiquitinated by CUL4A in response to UV irradiation. Ubiquitination appears to both impair DNA-binding and promotes ubiquitin-dependent proteolysis. Degradation of DDB2 at sites of DNA damage may be a prerequisite for their recognition by XPC and subsequent repair. CUL4A-mediated degradation appears to be promoted by ABL1. Ubiquitinated, leading to proteasomal degradation, and deubiquitinated by USP24. Deubiquitinated by USP44; leading to its stabilization on DNA lesions. Post-translationally, acetylated. Deacetylation by SIRT6 in response to UV stress facilitates nucleotide excision repair pathway (the NER pathway) transduction. As to expression, expressed in bone marrow, liver, lung, muscle, pancreas and spleen.

Its subcellular location is the nucleus. It localises to the chromosome. The protein operates within protein modification; protein ubiquitination. In terms of biological role, protein, which is both involved in DNA repair and protein ubiquitination, as part of the UV-DDB complex and DCX (DDB1-CUL4-X-box) complexes, respectively. Core component of the UV-DDB complex (UV-damaged DNA-binding protein complex), a complex that recognizes UV-induced DNA damage and recruit proteins of the nucleotide excision repair pathway (the NER pathway) to initiate DNA repair. The UV-DDB complex preferentially binds to cyclobutane pyrimidine dimers (CPD), 6-4 photoproducts (6-4 PP), apurinic sites and short mismatches. Also functions as the substrate recognition module for the DCX (DDB2-CUL4-X-box) E3 ubiquitin-protein ligase complex DDB2-CUL4-ROC1 (also known as CUL4-DDB-ROC1 and CUL4-DDB-RBX1). The DDB2-CUL4-ROC1 complex may ubiquitinate histone H2A, histone H3 and histone H4 at sites of UV-induced DNA damage. The ubiquitination of histones may facilitate their removal from the nucleosome and promote subsequent DNA repair. The DDB2-CUL4-ROC1 complex also ubiquitinates XPC, which may enhance DNA-binding by XPC and promote NER. The DDB2-CUL4-ROC1 complex also ubiquitinates KAT7/HBO1 in response to DNA damage, leading to its degradation: recognizes KAT7/HBO1 following phosphorylation by ATR. The sequence is that of DNA damage-binding protein 2 (Ddb2) from Mus musculus (Mouse).